Here is a 68-residue protein sequence, read N- to C-terminus: MTRQEELAAARAALHDLMTGKRVATVQKDGRRVEFTATSVSDLKKYIAELEVQTGMTQRRRGPAGFYV.

This sequence belongs to the lambda phage gpW family. In terms of assembly, monomer in solution, assembles into hexamers on the prohead. May bind FII and portal protein (Potential).

The protein localises to the virion. Its function is as follows. Plays a role in morphogenesis of the virion head after genome packaging. Presumably interacts with the portal vertex to stabilize the packaged DNA within the head after packaging. Probably binds to the head-tail connector protein FII. The polypeptide is Head completion protein (W) (Escherichia coli (Bacteriophage lambda)).